The following is a 230-amino-acid chain: GDT1-like protein 4 (230 aa).

Transmembrane regions (helical) follow at residues 12-32 (LAMTFVSEIGDKTFFAAAILA), 39-59 (LVLAGCLSALIVMTILSATLG), 71-91 (THHITTLLFFGFGLWSLWDGF), 135-155 (AFLTQFFSPIFLKAFSINFFG), 175-195 (FGVVLGGVVAQFLCTTAAVIG), and 207-227 (IVALSGGMLFIIFGIQSYLTS).

This sequence belongs to the GDT1 family.

The protein localises to the membrane. In Arabidopsis thaliana (Mouse-ear cress), this protein is GDT1-like protein 4.